The primary structure comprises 981 residues: Protein deadlock (981 aa).

Residues Met-1–Leu-60 are required for interaction with rhi/rhino. Disordered regions lie at residues Leu-72–Pro-195, Ile-274–Leu-307, Ser-327–Glu-352, Leu-375–Ile-446, Gly-554–Lys-586, and Leu-642–Arg-662. 2 stretches are compositionally biased toward polar residues: residues Pro-104–Thr-113 and Asn-150–Gln-160. Residues Lys-167 to Arg-191 are compositionally biased toward basic and acidic residues. A compositionally biased stretch (basic and acidic residues) spans Glu-337–Glu-352. Residues Lys-377 to Val-390 show a composition bias toward basic residues. Basic and acidic residues predominate over residues Thr-409–Ile-419. The segment covering Gln-422–Ile-446 has biased composition (polar residues). The span at Arg-652–Arg-662 shows a compositional bias: basic and acidic residues.

In terms of assembly, component of the Rhino-Deadlock-Cutoff (RDC) complex, composed of rhi/rhino, del/deadlock and cuff/cutoff. Interacts (via N-terminus) with rhi/rhino (via C-terminus); this interaction is direct. Interacts (via C-terminus) with cuff/cutoff; this interaction is direct.

The protein localises to the nucleus. Its subcellular location is the cytoplasm. It localises to the cytoskeleton. The protein resides in the microtubule organizing center. It is found in the centrosome. The protein localises to the chromosome. Developmental protein involved in oogenesis. Required for germline maintenance, stability of mitotic spindles, localization of patterning determinants, oocyte growth and fusome biogenesis in males and females. Also required for dorso-ventral and antero-posterior patterning of oocyte and eggshell. May be involved in microtubule function during oogenesis. Part of a rhi-dependent transcription machinery that enables the generation of piRNA precursors from heterochromatin while maintaining the suppression of transposon-encoded promoters and enhancers. Component of the RDC complex (rhi, del and cuff) which binds to repressive H3K9me3 marks in the piRNA clusters. RDC promotes the bidirectional transcription of piRNA clusters at these sites by interacting with Moonshiner which forms a complex with the transcription initiation factors TfIIA-S and Trf2. This mechanism allows transcription to occur in piRNA clusters despite the lack of proper promoter elements and in the presence of the repressive H3K9me3 mark. As part of the RDC complex, involved in suppression of splicing. This chain is Protein deadlock (del), found in Drosophila melanogaster (Fruit fly).